The chain runs to 447 residues: NADH peroxidase (447 aa).

Residues 7–11 (GSSHG), E32, C42, 110–113 (SPGA), and R132 each bind FAD. The active-site Proton acceptor is H10. C42 serves as the catalytic Redox-active. A Cysteine sulfenic acid (-SOH) modification is found at C42. NAD(+) is bound by residues I160, D179, Y188, and G243. FAD is bound at residue D281. NAD(+) is bound at residue A297. A299 serves as a coordination point for FAD. Position 328 (G328) interacts with NAD(+).

This sequence belongs to the class-III pyridine nucleotide-disulfide oxidoreductase family. Homotetramer. FAD is required as a cofactor.

It catalyses the reaction H2O2 + NADH + H(+) = NAD(+) + 2 H2O. Its function is as follows. Peroxidase whose active site is a redox-active cysteine-sulfenic acid. In Enterococcus faecalis (strain ATCC 700802 / V583), this protein is NADH peroxidase (npr).